A 141-amino-acid chain; its full sequence is Nucleoside triphosphatase NudI (141 aa).

Residues 1 to 141 (MRQRTIVCPL…RVTLSQKGLL (141 aa)) enclose the Nudix hydrolase domain. Residues 38 to 59 (GGVEPVERIEEALRREIREELG) carry the Nudix box motif.

This sequence belongs to the Nudix hydrolase family. NudI subfamily. As to quaternary structure, monomer. Mg(2+) is required as a cofactor.

It catalyses the reaction a ribonucleoside 5'-triphosphate + H2O = a ribonucleoside 5'-phosphate + diphosphate + H(+). It carries out the reaction a 2'-deoxyribonucleoside 5'-triphosphate + H2O = a 2'-deoxyribonucleoside 5'-phosphate + diphosphate + H(+). The catalysed reaction is dUTP + H2O = dUMP + diphosphate + H(+). The enzyme catalyses dTTP + H2O = dTMP + diphosphate + H(+). It catalyses the reaction dCTP + H2O = dCMP + diphosphate + H(+). In terms of biological role, catalyzes the hydrolysis of nucleoside triphosphates, with a preference for pyrimidine deoxynucleoside triphosphates (dUTP, dTTP and dCTP). The protein is Nucleoside triphosphatase NudI of Klebsiella pneumoniae (strain 342).